A 299-amino-acid chain; its full sequence is Endonuclease 4 (299 aa).

The N-terminal stretch at 1-24 (MSSSLRQWFARVLVLTQLINGALC) is a signal peptide. 2 residues coordinate a divalent metal cation: Trp25 and His30. 25 to 30 (WGKEGH) provides a ligand contact to substrate. Cysteines 34 and 65 form a disulfide. Asp69 and His84 together coordinate a divalent metal cation. Residues 69–75 (DEIKHHW), 84–87 (HYVD), and 94–99 (NYEYCR) contribute to the substrate site. Intrachain disulfides connect Cys93–Cys246, Cys101–Cys111, and Cys226–Cys233. Substrate contacts are provided by Asn118 and Tyr136. The N-linked (GlcNAc...) asparagine glycan is linked to Asn118. Residue Asn137 is glycosylated (N-linked (GlcNAc...) asparagine). The a divalent metal cation site is built by His147, Asp151, His157, His181, and Asp185. The substrate binding stretch occupies residues 147-196 (HFIGDIHQPLHVGFLGDEGGNTITVRWYRRKTNLHHVWDNMIIESALKTY). Asn198, Asn211, and Asn229 each carry an N-linked (GlcNAc...) asparagine glycan. Positions 284–299 (ATLNRIFSSKPKHAGS) are cleaved as a propeptide — removed in mature form.

It belongs to the nuclease type I family. Monomer. It depends on Mn(2+) as a cofactor. The cofactor is Ca(2+).

It carries out the reaction Endonucleolytic cleavage to 5'-phosphomononucleotide and 5'-phosphooligonucleotide end-products.. Its function is as follows. Endonuclease that can use single-stranded RNA and DNA as substrates. In contradiction with PubMed:23620482, cannot hydrolyze single-stranded DNA and does not cleave mismatches. The chain is Endonuclease 4 from Arabidopsis thaliana (Mouse-ear cress).